We begin with the raw amino-acid sequence, 549 residues long: DDB1- and CUL4-associated factor 11 (549 aa).

The segment covering 1 to 24 (MGSRNSSSAGSGSLEPSEGLSRRG) has biased composition (low complexity). The segment at 1–40 (MGSRNSSSAGSGSLEPSEGLSRRGTGLRRSEEEEEEDEDV) is disordered. Phosphoserine is present on residues Ser-73 and Ser-75. WD repeat units lie at residues 170 to 210 (TYSQ…HKFK), 216 to 258 (DVGW…TALD), 263 to 302 (ERRF…RTLQ), 305 to 345 (SHED…EDDP), 353 to 392 (GHQD…SREG), 435 to 480 (GVLH…KKLT), and 481 to 520 (NHKA…YFQD).

Interacts with DDB1 and CUL4A.

It participates in protein modification; protein ubiquitination. In terms of biological role, may function as a substrate receptor for CUL4-DDB1 E3 ubiquitin-protein ligase complex. The chain is DDB1- and CUL4-associated factor 11 (Dcaf11) from Mus musculus (Mouse).